The sequence spans 205 residues: Small ribosomal subunit protein mS26 (205 aa).

The N-terminal 27 residues, 1-27, are a transit peptide targeting the mitochondrion; the sequence is MLRALSRLGAGTPCRPRAPLVLPARGR.

Belongs to the mitochondrion-specific ribosomal protein mS26 family. Component of the mitochondrial small ribosomal subunit (mt-SSU). Mature mammalian 55S mitochondrial ribosomes consist of a small (28S) and a large (39S) subunit. The 28S small subunit contains a 12S ribosomal RNA (12S mt-rRNA) and 30 different proteins. The 39S large subunit contains a 16S rRNA (16S mt-rRNA), a copy of mitochondrial valine transfer RNA (mt-tRNA(Val)), which plays an integral structural role, and 52 different proteins.

It is found in the mitochondrion. This Homo sapiens (Human) protein is Small ribosomal subunit protein mS26 (MRPS26).